The chain runs to 506 residues: uncharacterized protein (506 aa).

It to group II intron maturases.

The protein resides in the plastid. It localises to the chloroplast. This is an uncharacterized protein from Euglena gracilis.